The primary structure comprises 207 residues: Ras-related protein Rab-5B (207 aa).

Residue Gly2 is the site of N-myristoyl glycine attachment. GTP is bound by residues 41-49 (GDSGVGKSS), 60-66 (SEKHQVT), 90-94 (DTGGQ), 148-151 (NKKD), and 176-178 (SAK). Positions 63–71 (HQVTIGAAF) match the Effector region motif.

It belongs to the small GTPase superfamily. Rab family. Interacts with CK1. May interact with ARF1. Post-translationally, myristoylation is required for cell membrane and food vacuole membrane localization. May be palmitoylated on Cys-3. In terms of processing, lacks the C-terminal cysteine motifs subject to isoprenylation present in mammalian RAB5B homolog.

The protein resides in the cell membrane. Its subcellular location is the vacuole membrane. The protein localises to the vesicle. It catalyses the reaction GTP + H2O = GDP + phosphate + H(+). Alternates between an inactive GDP-bound form and an active GTP-bound form. Activated by guanine nucleotide-exchange factors (GEFs) and inactivated by GTPase-activating proteins (GAPs). In terms of biological role, small GTPase which regulates vesicle trafficking between organelles. May be involved in the trafficking of the N-myristoylated AK2 from the endoplasmic reticulum to the parasitophorous vacuole membrane. The sequence is that of Ras-related protein Rab-5B from Plasmodium falciparum (isolate 3D7).